A 182-amino-acid polypeptide reads, in one-letter code: A-type ATP synthase subunit E (182 aa).

This sequence belongs to the V-ATPase E subunit family. In terms of assembly, has multiple subunits with at least A(3), B(3), C, D, E, F, H, I and proteolipid K(x).

The protein localises to the cell membrane. Its function is as follows. Component of the A-type ATP synthase that produces ATP from ADP in the presence of a proton gradient across the membrane. This chain is A-type ATP synthase subunit E, found in Picrophilus torridus (strain ATCC 700027 / DSM 9790 / JCM 10055 / NBRC 100828 / KAW 2/3).